We begin with the raw amino-acid sequence, 1331 residues long: Contactin-associated protein-like 2 (1331 aa).

The signal sequence occupies residues 1 to 27 (MLAAPRAGCGAALLLWIVSSCLCRAWT). Topologically, residues 28–1262 (APSTSQKCDE…IRNGVNRNSA (1235 aa)) are extracellular. The F5/8 type C domain occupies 35-181 (CDEPLVSGLP…IGLRIEVYGC (147 aa)). An intrachain disulfide couples Cys35 to Cys181. 2 consecutive Laminin G-like domains span residues 187–368 (VINF…SFSC) and 373–552 (TVPV…IDMC). Residues Asn289, Asn346, Asn363, Asn379, Asn436, Asn506, Asn507, and Asn546 are each glycosylated (N-linked (GlcNAc...) asparagine). Cys336 and Cys368 are joined by a disulfide. Intrachain disulfides connect Cys520-Cys552, Cys558-Cys569, Cys563-Cys578, and Cys580-Cys590. In terms of domain architecture, EGF-like 1 spans 554–591 (IIDRCVPNHCERGGKCSQTWDSFKCTCDETGYTGATCH). The region spanning 592–798 (NSIYEPSCEA…LRCQGDRNYW (207 aa)) is the Fibrinogen C-terminal domain. Residues Asn630 and Asn735 are each glycosylated (N-linked (GlcNAc...) asparagine). A Laminin G-like 3 domain is found at 799–963 (NAASFPNPSS…KVTSGFISGC (165 aa)). Cystine bridges form between Cys936-Cys963, Cys967-Cys980, Cys974-Cys989, and Cys991-Cys1001. Residues 964 to 1002 (SGHCTSYGTNCENGGKCLERYHGYSCDCSNTAYDGTFCN) enclose the EGF-like 2 domain. One can recognise a Laminin G-like 4 domain in the interval 1023-1214 (ATNARDSSSR…IQGELVESNC (192 aa)). 2 N-linked (GlcNAc...) asparagine glycosylation sites follow: Asn1116 and Asn1198. Cys1178 and Cys1214 are disulfide-bonded. A helical membrane pass occupies residues 1263–1283 (IIGGVIAVVIFTILCTLVFLI). Over 1284 to 1331 (RYMFRHKGTYHTNEAKGAESAESADAAIMNNDPNFTETIDESKKEWLI) the chain is Cytoplasmic. Phosphoserine occurs at positions 1303 and 1306.

Belongs to the neurexin family. As to quaternary structure, interacts (via C-terminus) with KCNA2.

The protein localises to the membrane. Its subcellular location is the cell projection. It is found in the axon. It localises to the cell junction. The protein resides in the paranodal septate junction. Its function is as follows. Required for gap junction formation. Required, with CNTNAP1, for radial and longitudinal organization of myelinated axons. Plays a role in the formation of functional distinct domains critical for saltatory conduction of nerve impulses in myelinated nerve fibers. Demarcates the juxtaparanodal region of the axo-glial junction. The polypeptide is Contactin-associated protein-like 2 (CNTNAP2) (Pongo abelii (Sumatran orangutan)).